We begin with the raw amino-acid sequence, 268 residues long: Tryptophan synthase alpha chain (268 aa).

Catalysis depends on proton acceptor residues Glu49 and Asp60.

The protein belongs to the TrpA family. As to quaternary structure, tetramer of two alpha and two beta chains.

The catalysed reaction is (1S,2R)-1-C-(indol-3-yl)glycerol 3-phosphate + L-serine = D-glyceraldehyde 3-phosphate + L-tryptophan + H2O. Its pathway is amino-acid biosynthesis; L-tryptophan biosynthesis; L-tryptophan from chorismate: step 5/5. Functionally, the alpha subunit is responsible for the aldol cleavage of indoleglycerol phosphate to indole and glyceraldehyde 3-phosphate. The chain is Tryptophan synthase alpha chain from Escherichia coli O1:K1 / APEC.